Here is a 545-residue protein sequence, read N- to C-terminus: Endo-beta-N-acetylglucosaminidase (545 aa).

Residues 1–36 (MTFIKQMMPRYVASMTAGIVAAAMAATCAFAPVANA) form the signal peptide. The region spanning 51–333 (RHFMVYYRAW…EDLRRIVPSN (283 aa)) is the GH18 domain. Residue E184 is the Proton donor of the active site. Residues 486-511 (PVPTPDSTDQNGNRDKVTNHKVQGQP) form a disordered region. The helical transmembrane segment at 518–538 (GISTDIIVAVGVTLAIAGVAL) threads the bilayer.

The protein belongs to the glycosyl hydrolase 18 family.

It localises to the cell membrane. It catalyses the reaction an N(4)-(oligosaccharide-(1-&gt;3)-[oligosaccharide-(1-&gt;6)]-beta-D-Man-(1-&gt;4)-beta-D-GlcNAc-(1-&gt;4)-alpha-D-GlcNAc)-L-asparaginyl-[protein] + H2O = an oligosaccharide-(1-&gt;3)-[oligosaccharide-(1-&gt;6)]-beta-D-Man-(1-&gt;4)-D-GlcNAc + N(4)-(N-acetyl-beta-D-glucosaminyl)-L-asparaginyl-[protein]. In terms of biological role, endoglycosidase with broad specificity that cleaves the chitobiose core of high mannose and complex N-linked glycans. Is able to release N-glycans from diverse host glycoproteins such as human and bovine lactoferrin, immunoglobulins A and G, and ribonuclease B. Is active directly on human breast milk - a complex matrix of lipids, oligosaccharides, and proteins with disparate glycosylation types - successfully removing a significant proportion of the total amount of N-glycans. Does not recognize O-linked glycans or free human milk oligosaccharides (HMO). In Bifidobacterium longum subsp. infantis (strain ATCC 15697 / DSM 20088 / JCM 1222 / NCTC 11817 / S12), this protein is Endo-beta-N-acetylglucosaminidase.